The primary structure comprises 224 residues: 7-cyano-7-deazaguanine synthase (224 aa).

10–20 (LSGGLDSATVV) contributes to the ATP binding site. Zn(2+)-binding residues include C189, C199, C202, and C205.

Belongs to the QueC family. The cofactor is Zn(2+).

It catalyses the reaction 7-carboxy-7-deazaguanine + NH4(+) + ATP = 7-cyano-7-deazaguanine + ADP + phosphate + H2O + H(+). The protein operates within purine metabolism; 7-cyano-7-deazaguanine biosynthesis. Functionally, catalyzes the ATP-dependent conversion of 7-carboxy-7-deazaguanine (CDG) to 7-cyano-7-deazaguanine (preQ(0)). The chain is 7-cyano-7-deazaguanine synthase from Pseudomonas fluorescens (strain SBW25).